A 454-amino-acid polypeptide reads, in one-letter code: Ribosomal protein uS12 methylthiotransferase RimO (454 aa).

The region spanning 14 to 125 (SKIAFSHVGC…IAKVLDRVEK (112 aa)) is the MTTase N-terminal domain. The [4Fe-4S] cluster site is built by Cys23, Cys59, Cys88, Cys163, Cys167, and Cys170. A Radical SAM core domain is found at 149 to 378 (DKNKFVAYLR…ISVQQNISRE (230 aa)). Residues 381-452 (QIYVGSKMKI…EYDLYGETIK (72 aa)) enclose the TRAM domain.

Belongs to the methylthiotransferase family. RimO subfamily. It depends on [4Fe-4S] cluster as a cofactor.

The protein localises to the cytoplasm. It carries out the reaction L-aspartate(89)-[ribosomal protein uS12]-hydrogen + (sulfur carrier)-SH + AH2 + 2 S-adenosyl-L-methionine = 3-methylsulfanyl-L-aspartate(89)-[ribosomal protein uS12]-hydrogen + (sulfur carrier)-H + 5'-deoxyadenosine + L-methionine + A + S-adenosyl-L-homocysteine + 2 H(+). Functionally, catalyzes the methylthiolation of an aspartic acid residue of ribosomal protein uS12. This chain is Ribosomal protein uS12 methylthiotransferase RimO, found in Prochlorococcus marinus (strain MIT 9301).